A 426-amino-acid chain; its full sequence is NADH-quinone oxidoreductase subunit D 1 (426 aa).

A disordered region spans residues 1 to 51; sequence MATEFTVPDSAARIATAQQAGGGTPVRSGPPDEGGEFSGDRMSLSMGPSHP.

The protein belongs to the complex I 49 kDa subunit family. NDH-1 is composed of 14 different subunits. Subunits NuoB, C, D, E, F, and G constitute the peripheral sector of the complex.

It localises to the cell inner membrane. The catalysed reaction is a quinone + NADH + 5 H(+)(in) = a quinol + NAD(+) + 4 H(+)(out). Functionally, NDH-1 shuttles electrons from NADH, via FMN and iron-sulfur (Fe-S) centers, to quinones in the respiratory chain. The immediate electron acceptor for the enzyme in this species is believed to be ubiquinone. Couples the redox reaction to proton translocation (for every two electrons transferred, four hydrogen ions are translocated across the cytoplasmic membrane), and thus conserves the redox energy in a proton gradient. This Opitutus terrae (strain DSM 11246 / JCM 15787 / PB90-1) protein is NADH-quinone oxidoreductase subunit D 1.